Here is a 130-residue protein sequence, read N- to C-terminus: Protachykinin-1 (130 aa).

A signal peptide spans 1 to 19 (MKILVAVAVFFLVSTQLFA). Residues 20 to 56 (EEIDANDDLNYWSDWSDSDQIKEAMPEPFEHLLQRIA) constitute a propeptide that is removed on maturation. Methionine amide occurs at positions 68 and 107.

It belongs to the tachykinin family. The substance P form is cleaved at Pro-59 by the prolyl endopeptidase FAP (seprase) activity (in vitro). Substance P is also cleaved and degraded by Angiotensin-converting enzyme (ACE) and neprilysin (MME).

The protein localises to the secreted. Tachykinins are active peptides which excite neurons, evoke behavioral responses, are potent vasodilators and secretagogues, and contract (directly or indirectly) many smooth muscles. This is Protachykinin-1 (Tac1) from Mus musculus (Mouse).